Here is a 291-residue protein sequence, read N- to C-terminus: Porphobilinogen deaminase (291 aa).

S-(dipyrrolylmethanemethyl)cysteine is present on cysteine 237.

Belongs to the HMBS family. As to quaternary structure, monomer. It depends on dipyrromethane as a cofactor.

The enzyme catalyses 4 porphobilinogen + H2O = hydroxymethylbilane + 4 NH4(+). Its pathway is porphyrin-containing compound metabolism; protoporphyrin-IX biosynthesis; coproporphyrinogen-III from 5-aminolevulinate: step 2/4. Its function is as follows. Tetrapolymerization of the monopyrrole PBG into the hydroxymethylbilane pre-uroporphyrinogen in several discrete steps. This is Porphobilinogen deaminase from Clostridium perfringens (strain 13 / Type A).